The following is a 397-amino-acid chain: MSESVHTNTSLWSKGMKAVIVAQFLSAFGDNALLFATLALLNAQFYPEWSQPILQMVFVGAYILFAPFVGQVADSFAKGRVMMFANGLKLLGAASICFGINPFLGYTLVGVGAAAYSPAKYGILGELTTGSKLVKANGLMEASTIAAILLGSVAGGVLADWHVLVALAACALAYGGAVVANIYIPKLAAARPGQSWNLINMTRSFLNACTSLWRNGETRFSLVGTSLFWGAGVTLRFLLVLWVPVALGITDNATPTYLNAMVAIGIVVGAGAAAKLVTLETVSRCMPAGILIGVVVLIFSLQHELLPAYALLMLIGVMGGFFVVPLNALLQERGKKSVGAGNAIAVQNLGENSAMLLMLGIYSLAVMIGIPVVPIGIGFGALFALAITALWIWQRRH.

The Periplasmic segment spans residues 1–17; it reads MSESVHTNTSLWSKGMK. A helical membrane pass occupies residues 18 to 38; sequence AVIVAQFLSAFGDNALLFATL. Residues 39–52 are Cytoplasmic-facing; that stretch reads ALLNAQFYPEWSQP. Residues 53-73 traverse the membrane as a helical segment; sequence ILQMVFVGAYILFAPFVGQVA. Topologically, residues 74–90 are periplasmic; sequence DSFAKGRVMMFANGLKL. Residues 91–111 traverse the membrane as a helical segment; the sequence is LGAASICFGINPFLGYTLVGV. The Cytoplasmic portion of the chain corresponds to 112–144; it reads GAAAYSPAKYGILGELTTGSKLVKANGLMEAST. Residues 145–165 traverse the membrane as a helical segment; sequence IAAILLGSVAGGVLADWHVLV. Residue Ala166 is a topological domain, periplasmic. A helical membrane pass occupies residues 167-187; that stretch reads LAACALAYGGAVVANIYIPKL. Residues 188–226 are Cytoplasmic-facing; it reads AAARPGQSWNLINMTRSFLNACTSLWRNGETRFSLVGTS. A helical membrane pass occupies residues 227-247; it reads LFWGAGVTLRFLLVLWVPVAL. Residues 248 to 256 lie on the Periplasmic side of the membrane; it reads GITDNATPT. The helical transmembrane segment at 257-277 threads the bilayer; that stretch reads YLNAMVAIGIVVGAGAAAKLV. The Cytoplasmic segment spans residues 278–280; sequence TLE. The helical transmembrane segment at 281–301 threads the bilayer; that stretch reads TVSRCMPAGILIGVVVLIFSL. The Periplasmic portion of the chain corresponds to 302–304; sequence QHE. The chain crosses the membrane as a helical span at residues 305 to 325; that stretch reads LLPAYALLMLIGVMGGFFVVP. Residues 326-343 lie on the Cytoplasmic side of the membrane; it reads LNALLQERGKKSVGAGNA. Residues 344–364 traverse the membrane as a helical segment; that stretch reads IAVQNLGENSAMLLMLGIYSL. Residues 365-366 are Periplasmic-facing; that stretch reads AV. Residues 367–387 traverse the membrane as a helical segment; it reads MIGIPVVPIGIGFGALFALAI. The Cytoplasmic portion of the chain corresponds to 388-397; it reads TALWIWQRRH.

The protein belongs to the major facilitator superfamily. LplT (TC 2.A.1.42) family.

It is found in the cell inner membrane. Its function is as follows. Catalyzes the facilitated diffusion of 2-acyl-glycero-3-phosphoethanolamine (2-acyl-GPE) into the cell. The sequence is that of Lysophospholipid transporter LplT from Escherichia coli (strain SE11).